A 353-amino-acid polypeptide reads, in one-letter code: Lysophosphatidic acid receptor 3 (353 aa).

Over 1–31 the chain is Extracellular; the sequence is MNECHYDKHMDFFYNRSNTDTVDDWTGTKLV. The N-linked (GlcNAc...) asparagine glycan is linked to N15. A helical transmembrane segment spans residues 32–52; it reads IVLCVGTFFCLFIFFSNSLVI. The Cytoplasmic portion of the chain corresponds to 53 to 67; it reads AAVIKNRKFHFPFYY. Residues 68-88 traverse the membrane as a helical segment; it reads LLANLAAADFFAGIAYVFLMF. The Extracellular portion of the chain corresponds to 89–101; sequence NTGPVSKTLTVNR. Residues 102-124 form a helical membrane-spanning segment; the sequence is WFLRQGLLDSSLTASLTNLLVIA. Topologically, residues 125 to 146 are cytoplasmic; sequence VERHMSIMRMRVHSNLTKKRVT. Residues 147 to 167 traverse the membrane as a helical segment; sequence LLILLVWAIAIFMGAVPTLGW. Residues 168–186 are Extracellular-facing; sequence NCLCNISACSSLAPIYSRS. The N-linked (GlcNAc...) asparagine glycan is linked to N172. The helical transmembrane segment at 187–207 threads the bilayer; sequence YLVFWTVSNLMAFLIMVVVYL. Over 208-240 the chain is Cytoplasmic; it reads RIYVYVKRKTNVLSPHTSGSISRRRTPMKLMKT. A helical membrane pass occupies residues 241–261; sequence VMTVLGAFVVCWTPGLVVLLL. The Extracellular segment spans residues 262–276; sequence DGLNCRQCGVQHVKR. The helical transmembrane segment at 277 to 297 threads the bilayer; sequence WFLLLALLNSVVNPIIYSYKD. Residues 298–353 lie on the Cytoplasmic side of the membrane; it reads EDMYGTMKKMICCFSQENPERRPSRIPSTVLSRSDTGSQYIEDSISQGAVCNKSTS. A lipid anchor (S-palmitoyl cysteine) is attached at C309.

This sequence belongs to the G-protein coupled receptor 1 family. In terms of tissue distribution, most abundantly expressed in prostate, testes, pancreas, and heart, with moderate levels in lung and ovary. No detectable expression in brain, placenta, liver, skeletal muscle, kidney, spleen, thymus, small intestine, colon, or peripheral blood leukocytes.

The protein localises to the cell membrane. In terms of biological role, receptor for lysophosphatidic acid (LPA), a mediator of diverse cellular activities. May play a role in the development of ovarian cancer. Seems to be coupled to the G(i)/G(o) and G(q) families of heteromeric G proteins. The protein is Lysophosphatidic acid receptor 3 (LPAR3) of Homo sapiens (Human).